Here is a 352-residue protein sequence, read N- to C-terminus: MMLEINVKKRLGQLVLNARLTIPGQGITGIFGISGSGKSSLINLVSGLIHPDEGNIRLNDRTLIDTANNICLAPNQRNIGYVFQDARLFPHYSVKGNLCYGIKRFNQQEFNRIVRLLGIEHLLARYPLTLSGGEKQRVAIGRALLSNPEMLLMDEPLSALDLPRKRELLAYLEKLSQEINIPILYVTHSLDELFRLADFVVLLDEGKVAAFDSLENLWQSPLFEPWQEQGQKSAVLSLPILNHNFSYKMTALLLGEQQLWVKLLNGDEGKTVRICIRSTDVSITLTVPEKTSIRNILSGKIITLLPKGNQVDVKIALGKDEIWASVSTWAAEELQLQIGQSVYAQIKAVSVM.

The 229-residue stretch at 2–230 folds into the ABC transporter domain; the sequence is MLEINVKKRL…PLFEPWQEQG (229 aa). 32-39 provides a ligand contact to ATP; that stretch reads GISGSGKS. The 63-residue stretch at 290–352 folds into the Mop domain; it reads KTSIRNILSG…YAQIKAVSVM (63 aa).

This sequence belongs to the ABC transporter superfamily. Molybdate importer (TC 3.A.1.8) family. The complex is composed of two ATP-binding proteins (ModC), two transmembrane proteins (ModB) and a solute-binding protein (ModA).

It localises to the cell inner membrane. It catalyses the reaction molybdate(out) + ATP + H2O = molybdate(in) + ADP + phosphate + H(+). Part of the ABC transporter complex ModABC involved in molybdenum import. Responsible for energy coupling to the transport system. The sequence is that of Molybdenum import ATP-binding protein ModC from Mannheimia succiniciproducens (strain KCTC 0769BP / MBEL55E).